The primary structure comprises 394 residues: Cell division protein FtsZ (394 aa).

Residues 21–25, 108–110, Glu-139, Arg-143, and Asp-187 each bind GTP; these read GGGGN and GTG.

This sequence belongs to the FtsZ family. In terms of assembly, homodimer. Polymerizes to form a dynamic ring structure in a strictly GTP-dependent manner. Interacts directly with several other division proteins. Interacts with the SulA inhibitor.

The protein localises to the cytoplasm. Its function is as follows. Essential cell division protein that forms a contractile ring structure (Z ring) at the future cell division site. The regulation of the ring assembly controls the timing and the location of cell division. One of the functions of the FtsZ ring is to recruit other cell division proteins to the septum to produce a new cell wall between the dividing cells. Binds GTP and shows GTPase activity. The polypeptide is Cell division protein FtsZ (Pseudomonas aeruginosa (strain ATCC 15692 / DSM 22644 / CIP 104116 / JCM 14847 / LMG 12228 / 1C / PRS 101 / PAO1)).